The following is a 572-amino-acid chain: Proline--tRNA ligase (572 aa).

Belongs to the class-II aminoacyl-tRNA synthetase family. ProS type 1 subfamily. Homodimer.

The protein resides in the cytoplasm. The enzyme catalyses tRNA(Pro) + L-proline + ATP = L-prolyl-tRNA(Pro) + AMP + diphosphate. Its function is as follows. Catalyzes the attachment of proline to tRNA(Pro) in a two-step reaction: proline is first activated by ATP to form Pro-AMP and then transferred to the acceptor end of tRNA(Pro). As ProRS can inadvertently accommodate and process non-cognate amino acids such as alanine and cysteine, to avoid such errors it has two additional distinct editing activities against alanine. One activity is designated as 'pretransfer' editing and involves the tRNA(Pro)-independent hydrolysis of activated Ala-AMP. The other activity is designated 'posttransfer' editing and involves deacylation of mischarged Ala-tRNA(Pro). The misacylated Cys-tRNA(Pro) is not edited by ProRS. The protein is Proline--tRNA ligase of Yersinia pseudotuberculosis serotype IB (strain PB1/+).